A 124-amino-acid polypeptide reads, in one-letter code: CBS domain-containing protein MJ0729 (124 aa).

CBS domains follow at residues 10 to 67 (MNKD…IEDL) and 70 to 124 (LIDE…YKNR).

In terms of assembly, exhibits a pH-dependent oligomerization state: at pH 7, the dominant species is a dimer, where each monomer is a two-CBS domain protein, and at pH 4.5-4.8, the dominant species is a tetramer, with an oblong shape. At pH 2.5, there is formation of intermolecular hydrogen bonds, suggesting the presence of high-molecular weight species. The physiological dimeric species is thermal and chemically very stable.

In Methanocaldococcus jannaschii (strain ATCC 43067 / DSM 2661 / JAL-1 / JCM 10045 / NBRC 100440) (Methanococcus jannaschii), this protein is CBS domain-containing protein MJ0729.